The sequence spans 154 residues: RNA-binding protein PAB1135 (154 aa).

Homodimer in solution.

In terms of biological role, in vitro, binds efficiently double-stranded RNAs in a non-sequence specific manner. This is RNA-binding protein PAB1135 from Pyrococcus abyssi (strain GE5 / Orsay).